The following is a 377-amino-acid chain: tRNA-specific 2-thiouridylase MnmA (377 aa).

ATP-binding positions include Gly8–Ser15 and Met34. The segment at Asn94–Asp96 is interaction with target base in tRNA. Cys99 functions as the Nucleophile in the catalytic mechanism. Residues Cys99 and Cys201 are joined by a disulfide bond. Residue Gly123 participates in ATP binding. Residues Lys151 to Gln153 form an interaction with tRNA region. Cys201 acts as the Cysteine persulfide intermediate in catalysis. The interaction with tRNA stretch occupies residues Arg315–Tyr316.

This sequence belongs to the MnmA/TRMU family.

The protein localises to the cytoplasm. It carries out the reaction S-sulfanyl-L-cysteinyl-[protein] + uridine(34) in tRNA + AH2 + ATP = 2-thiouridine(34) in tRNA + L-cysteinyl-[protein] + A + AMP + diphosphate + H(+). In terms of biological role, catalyzes the 2-thiolation of uridine at the wobble position (U34) of tRNA, leading to the formation of s(2)U34. This Acinetobacter baylyi (strain ATCC 33305 / BD413 / ADP1) protein is tRNA-specific 2-thiouridylase MnmA.